A 427-amino-acid chain; its full sequence is Serine--tRNA ligase (427 aa).

L-serine is bound at residue 231–233; the sequence is TAE. Position 262–264 (262–264) interacts with ATP; that stretch reads RSE. E285 lines the L-serine pocket. 349–352 contacts ATP; sequence EISS. An L-serine-binding site is contributed by S385.

It belongs to the class-II aminoacyl-tRNA synthetase family. Type-1 seryl-tRNA synthetase subfamily. In terms of assembly, homodimer. The tRNA molecule binds across the dimer.

The protein localises to the cytoplasm. The enzyme catalyses tRNA(Ser) + L-serine + ATP = L-seryl-tRNA(Ser) + AMP + diphosphate + H(+). The catalysed reaction is tRNA(Sec) + L-serine + ATP = L-seryl-tRNA(Sec) + AMP + diphosphate + H(+). It participates in aminoacyl-tRNA biosynthesis; selenocysteinyl-tRNA(Sec) biosynthesis; L-seryl-tRNA(Sec) from L-serine and tRNA(Sec): step 1/1. Its function is as follows. Catalyzes the attachment of serine to tRNA(Ser). Is also able to aminoacylate tRNA(Sec) with serine, to form the misacylated tRNA L-seryl-tRNA(Sec), which will be further converted into selenocysteinyl-tRNA(Sec). The sequence is that of Serine--tRNA ligase from Hahella chejuensis (strain KCTC 2396).